Reading from the N-terminus, the 409-residue chain is Argininosuccinate synthase (409 aa).

Residue 9–17 coordinates ATP; the sequence is AYSGGLDTS. Residue Tyr-86 participates in L-citrulline binding. Gly-116 provides a ligand contact to ATP. Residues Thr-118, Asn-122, and Asp-123 each contribute to the L-aspartate site. Asn-122 is a binding site for L-citrulline. Residues Arg-126, Ser-174, Ser-183, Glu-259, and Tyr-271 each contribute to the L-citrulline site.

It belongs to the argininosuccinate synthase family. Type 1 subfamily. Homotetramer.

The protein resides in the cytoplasm. It catalyses the reaction L-citrulline + L-aspartate + ATP = 2-(N(omega)-L-arginino)succinate + AMP + diphosphate + H(+). The protein operates within amino-acid biosynthesis; L-arginine biosynthesis; L-arginine from L-ornithine and carbamoyl phosphate: step 2/3. The protein is Argininosuccinate synthase of Halalkalibacterium halodurans (strain ATCC BAA-125 / DSM 18197 / FERM 7344 / JCM 9153 / C-125) (Bacillus halodurans).